Here is a 235-residue protein sequence, read N- to C-terminus: Ferric nitrobindin-like protein (235 aa).

The disordered stretch occupies residues 1 to 59 (MSDLASEGSDPAERASEHSNGNAPADRPARRSGDQAVADAAERAKATGSRNIPVLPDLP). Positions 85–91 (GVWRGEG) match the GXWXGXG motif.

It belongs to the nitrobindin family.

The polypeptide is Ferric nitrobindin-like protein (Nocardia farcinica (strain IFM 10152)).